A 640-amino-acid polypeptide reads, in one-letter code: Leucine-rich repeat-containing protein 4C (640 aa).

Positions Met1 to Ala44 are cleaved as a signal peptide. One can recognise an LRRNT domain in the interval Gln45–Thr76. 9 LRR repeats span residues Asn77–His98, His101–Gly122, Asn125–Tyr146, Lys149–Arg170, Ser173–Gly195, Asn198–Ile219, Lys220–Gly241, His244–Asn265, and Ser268–Pro289. The region spanning Asn301–Ala353 is the LRRCT domain. An Ig-like C2-type domain is found at Pro354–Asn442. Cys375 and Cys426 are joined by a disulfide. The interval Glu463–Asp483 is disordered. Residues Ile528–Tyr548 form a helical membrane-spanning segment. Position 631 is a phosphoserine (Ser631).

In terms of assembly, interacts with NTNG1 and WHRN. As to expression, highly expressed in the cerebral cortex, including frontal, parietal and occipital lobes. Putamen, amygdala, hippocampus and medulla oblongata show moderate expression. Caudate nucleus and thalamus express small amounts, whereas other brain regions show very weak or no expression.

The protein localises to the postsynaptic cell membrane. Its function is as follows. May promote neurite outgrowth of developing thalamic neurons. This chain is Leucine-rich repeat-containing protein 4C (LRRC4C), found in Homo sapiens (Human).